Reading from the N-terminus, the 200-residue chain is Recombination protein RecR (200 aa).

The C4-type zinc finger occupies 57-72; that stretch reads CQHCRTFTENSLCDIC. In terms of domain architecture, Toprim spans 81-176; sequence GQLCIVETPA…NITRIAHGVP (96 aa).

Belongs to the RecR family.

May play a role in DNA repair. It seems to be involved in an RecBC-independent recombinational process of DNA repair. It may act with RecF and RecO. The polypeptide is Recombination protein RecR (Tolumonas auensis (strain DSM 9187 / NBRC 110442 / TA 4)).